A 284-amino-acid chain; its full sequence is Trimeric intracellular cation channel type B (284 aa).

Over 1–15 (MESFSELSLQFSQLS) the chain is Lumenal. Residues 16–32 (MFPFFETAHYLTSVMSA) traverse the membrane as a helical segment. At 33–44 (REQAGAVDVASR) the chain is on the cytoplasmic side. The helical transmembrane segment at 45–68 (SPLASWFSSMLYCFGGGILSSILL) threads the bilayer. The Lumenal segment spans residues 69 to 79 (AEPPVGILSNT). A helical transmembrane segment spans residues 80–99 (TSIILASAVWYMVYYFPYDL). At 100–102 (FYN) the chain is on the cytoplasmic side. A helical transmembrane segment spans residues 103 to 121 (CFFFLPIRLILAGMKEVTR). A 1,2-diacyl-sn-glycero-3-phospho-(1D-myo-inositol-4,5-bisphosphate)-binding residues include K117 and R121. The Lumenal portion of the chain corresponds to 122–139 (TWKILSGVAHAHSHYKDA). Residues 140 to 157 (MLVMITIGWARGAGGGLI) form a helical membrane-spanning segment. At 158–178 (SNFEQLVRGVWKPESNEFLKM) the chain is on the cytoplasmic side. A helical transmembrane segment spans residues 179-196 (SYPVKVTLIGAVLFTLQH). Topologically, residues 197–204 (GQYLPISR) are lumenal. A helical membrane pass occupies residues 205–225 (HNLMFIYTLFLILIKVTMMLT). Residues 226 to 284 (RSTASPFLPLETSLQHILFSRQQIPAEVRESPSSSGDKGKPSKKTLDKDSGEQDNKKDN) lie on the Cytoplasmic side of the membrane. The disordered stretch occupies residues 250-284 (PAEVRESPSSSGDKGKPSKKTLDKDSGEQDNKKDN). Residues 262–284 (DKGKPSKKTLDKDSGEQDNKKDN) show a composition bias toward basic and acidic residues.

This sequence belongs to the TMEM38 family. As to quaternary structure, homotrimer; conformation seems to be controled by binding to diacylglycerol (DAG).

It is found in the endoplasmic reticulum membrane. It catalyses the reaction K(+)(in) = K(+)(out). With respect to regulation, channel activity is activated by increased cytosolic Ca(2+) levels and blocked by luminal high Ca(2+) levels. Its function is as follows. Intracellular monovalent cation channel required for maintenance of rapid intracellular calcium release. Acts as a potassium counter-ion channel that functions in synchronization with calcium release from intracellular stores. Activated by increased cytosolic Ca(2+) levels. The protein is Trimeric intracellular cation channel type B (tmem38b) of Xenopus tropicalis (Western clawed frog).